Reading from the N-terminus, the 795-residue chain is Levansucrase (795 aa).

A signal peptide spans 1–36; sequence METKVRKKMYKKGKFWVVATITTAMLTGIGLSSVQA. Polar residues-rich tracts occupy residues 42–66 and 112–130; these read TQVS…SAAE and QAAT…GQTN. 2 disordered regions span residues 42–83 and 103–138; these read TQVS…NPAA and ESKA…ATKE. The sucrose site is built by tryptophan 245, aspartate 246, and serine 315. The active-site Nucleophile is aspartate 246. Aspartate 394 provides a ligand contact to Ca(2+). 2 residues coordinate sucrose: arginine 399 and aspartate 400. Glutamine 425, asparagine 464, and aspartate 496 together coordinate Ca(2+). Sucrose is bound at residue glutamate 497. Glutamate 499 functions as the Proton donor/acceptor in the catalytic mechanism. Position 517 (arginine 517) interacts with sucrose. A helical membrane pass occupies residues 774-794; sequence GNSFFAALLALFSAFCVSIGF.

This sequence belongs to the glycosyl hydrolase 68 family.

The protein resides in the cell membrane. Its subcellular location is the cell surface. The enzyme catalyses [6)-beta-D-fructofuranosyl-(2-&gt;](n) alpha-D-glucopyranoside + sucrose = [6)-beta-D-fructofuranosyl-(2-&gt;](n+1) alpha-D-glucopyranoside + D-glucose. Its activity is regulated as follows. Ca(2+) may play an important structural role and promote stability of levansucrase. In terms of biological role, catalyzes the synthesis of levan, a fructose polymer, by transferring the fructosyl moiety from sucrose to a growing acceptor molecule. Also displays sucrose hydrolase activity. The polypeptide is Levansucrase (Streptococcus mutans serotype c (strain ATCC 700610 / UA159)).